The following is an 84-amino-acid chain: Small ribosomal subunit protein bS18 (84 aa).

It belongs to the bacterial ribosomal protein bS18 family. As to quaternary structure, part of the 30S ribosomal subunit. Forms a tight heterodimer with protein bS6.

Binds as a heterodimer with protein bS6 to the central domain of the 16S rRNA, where it helps stabilize the platform of the 30S subunit. The polypeptide is Small ribosomal subunit protein bS18 (Maricaulis maris (strain MCS10) (Caulobacter maris)).